A 327-amino-acid polypeptide reads, in one-letter code: Ribosomal RNA large subunit methyltransferase F (327 aa).

It belongs to the methyltransferase superfamily. METTL16/RlmF family.

The protein localises to the cytoplasm. The enzyme catalyses adenosine(1618) in 23S rRNA + S-adenosyl-L-methionine = N(6)-methyladenosine(1618) in 23S rRNA + S-adenosyl-L-homocysteine + H(+). In terms of biological role, specifically methylates the adenine in position 1618 of 23S rRNA. The polypeptide is Ribosomal RNA large subunit methyltransferase F (Marinomonas sp. (strain MWYL1)).